Reading from the N-terminus, the 209-residue chain is Ribosomal RNA large subunit methyltransferase E (209 aa).

S-adenosyl-L-methionine contacts are provided by G63, W65, D83, D99, and D124. K164 functions as the Proton acceptor in the catalytic mechanism.

This sequence belongs to the class I-like SAM-binding methyltransferase superfamily. RNA methyltransferase RlmE family.

The protein resides in the cytoplasm. The enzyme catalyses uridine(2552) in 23S rRNA + S-adenosyl-L-methionine = 2'-O-methyluridine(2552) in 23S rRNA + S-adenosyl-L-homocysteine + H(+). In terms of biological role, specifically methylates the uridine in position 2552 of 23S rRNA at the 2'-O position of the ribose in the fully assembled 50S ribosomal subunit. The chain is Ribosomal RNA large subunit methyltransferase E from Vibrio campbellii (strain ATCC BAA-1116).